The chain runs to 151 residues: MKIIFVFALLAIAACSATAQFDVLGQNIRQYQVQSPLLLQQQVLSPYNEFVRQQYSIAASTFLQSAAFQLRNNQVLQQLRLVAQQSHYQDINVVQAIAHQLHLQQFGNLYIDRNLAQAQALLAFNLPSTYGIYPWSYSAPDSITTLGGVLY.

The signal sequence occupies residues Met1–Ala19. Gln20 carries the post-translational modification Pyrrolidone carboxylic acid.

This sequence belongs to the prolamin family.

Its subcellular location is the vacuole. The protein resides in the aleurone grain. Seed storage protein; serves as a source of nitrogen, carbon and sulfur for the young developing seedling. This is Prolamin PPROL 14P (PROLM20) from Oryza sativa subsp. japonica (Rice).